The sequence spans 159 residues: NADH-quinone oxidoreductase subunit I (159 aa).

4Fe-4S ferredoxin-type domains follow at residues 51–80 (RRYE…IEAD) and 90–119 (TRYD…EGPN). Residues cysteine 60, cysteine 63, cysteine 66, cysteine 70, cysteine 99, cysteine 102, cysteine 105, and cysteine 109 each coordinate [4Fe-4S] cluster.

It belongs to the complex I 23 kDa subunit family. In terms of assembly, NDH-1 is composed of 14 different subunits. Subunits NuoA, H, J, K, L, M, N constitute the membrane sector of the complex. Requires [4Fe-4S] cluster as cofactor.

It localises to the cell inner membrane. It carries out the reaction a quinone + NADH + 5 H(+)(in) = a quinol + NAD(+) + 4 H(+)(out). In terms of biological role, NDH-1 shuttles electrons from NADH, via FMN and iron-sulfur (Fe-S) centers, to quinones in the respiratory chain. The immediate electron acceptor for the enzyme in this species is believed to be ubiquinone. Couples the redox reaction to proton translocation (for every two electrons transferred, four hydrogen ions are translocated across the cytoplasmic membrane), and thus conserves the redox energy in a proton gradient. The chain is NADH-quinone oxidoreductase subunit I from Rickettsia rickettsii (strain Sheila Smith).